Reading from the N-terminus, the 285-residue chain is MLLATFKLCAGSSYRHMRNMKGLRQQAVMAISQELNRRALGGPTPSTWINQVRRRSSLLGSRLEETLYSDQELAYLQQGEEAMQKALGILSNQEGWKKESQQDNGDKVMSKVVPDVGKVFRLEVVVDQPMERLYEELVERMEAMGEWNPNVKEIKVLQKIGKDTFITHELAAEAAGNLVGPRDFVSVRCAKRRGSTCVLAGMATDFGNMPEQKGVIRAEHGPTCMVLHPLAGSPSKTKLTWLLSIDLKGWLPKSIINQVLSQTQVDFANHLRKRLESHPASEARC.

Residues 1 to 63 constitute a mitochondrion transit peptide; sequence MLLATFKLCA…RRSSLLGSRL (63 aa). Residues Ser57 and Ser195 each carry the phosphoserine; by PKA modification. The region spanning 67 to 280 is the START domain; that stretch reads LYSDQELAYL…LRKRLESHPA (214 aa).

In terms of assembly, may interact with TSPO. As to expression, expressed in gonads, adrenal cortex and kidney.

It is found in the mitochondrion. It catalyses the reaction cholesterol(in) = cholesterol(out). Its pathway is steroid metabolism; cholesterol metabolism. Its function is as follows. Plays a key role in steroid hormone synthesis by enhancing the metabolism of cholesterol into pregnenolone. Mediates the transfer of cholesterol from the outer mitochondrial membrane to the inner mitochondrial membrane where it is cleaved to pregnenolone. This Homo sapiens (Human) protein is Steroidogenic acute regulatory protein, mitochondrial (STAR).